The chain runs to 591 residues: L-fucose isomerase (591 aa).

Residues Glu-337 and Asp-361 each act as proton acceptor in the active site. Mn(2+)-binding residues include Glu-337, Asp-361, and His-528.

This sequence belongs to the L-fucose isomerase family. Homohexamer. It depends on Mn(2+) as a cofactor.

It is found in the cytoplasm. It catalyses the reaction L-fucose = L-fuculose. It carries out the reaction D-arabinose = D-ribulose. The catalysed reaction is L-xylopyranose = L-xylulose. It participates in carbohydrate degradation; L-fucose degradation; L-lactaldehyde and glycerone phosphate from L-fucose: step 1/3. With respect to regulation, inhibited by ribitol, L-arabitol and dulcitol. Isomerization of L-xylulose to L-xylose is inhibited by xylitol. In terms of biological role, converts the aldose L-fucose into the corresponding ketose L-fuculose. Also converts D-arabinose into D-ribulose. In addition, catalyzes the isomerization of L-xylulose to L-xylose. The sequence is that of L-fucose isomerase from Escherichia coli (strain K12).